Here is a 405-residue protein sequence, read N- to C-terminus: MAGVLGMILAGGEGSRLRPLTESRTKPAVPFGGSYRLIDFALNNFVNADLMRIYVLTQFKSQSLFQHMKKGWNVNGITDRFIDPVPAQMRTGKRWYEGTADAIYQNISFIESTDPEHVCIFGSDHIYKMDIRQMLDFHKKKKAALTVSALRMPAKDASGFGVIEVDEHGKMIGFEEKPSNPKCIPGQPGIALVSMGNYIFEAESLCKELIHDAALEDSSHDFGKDIIPKMFPEGNVYVYDFSTNHIKGEKKEVYWRDVGTIESYWEAHMDLLKKDAPFSLYNRKWPLHTYYPPLPPATFSDSDNGRVQIIDSLVCGGSYIRGSRIEKSVLGFRSNIASACDISESILLGNVKVGKGCVLRRVIVDKGADIAPGTEIGVNLQEDKKRYHVSDEGIVVIPKGERVGY.

Residues Y96, G161, 176–177 (EK), and S194 contribute to the alpha-D-glucose 1-phosphate site.

It belongs to the bacterial/plant glucose-1-phosphate adenylyltransferase family. Homotetramer.

The enzyme catalyses alpha-D-glucose 1-phosphate + ATP + H(+) = ADP-alpha-D-glucose + diphosphate. It functions in the pathway glycan biosynthesis; glycogen biosynthesis. Its function is as follows. Involved in the biosynthesis of ADP-glucose, a building block required for the elongation reactions to produce glycogen. Catalyzes the reaction between ATP and alpha-D-glucose 1-phosphate (G1P) to produce pyrophosphate and ADP-Glc. The chain is Glucose-1-phosphate adenylyltransferase from Aliivibrio fischeri (strain ATCC 700601 / ES114) (Vibrio fischeri).